The following is a 182-amino-acid chain: Dipetalodipin (182 aa).

A signal peptide spans 1–18 (MKTIIAAIFLGILMHAFA). Intrachain disulfides connect cysteine 21–cysteine 134, cysteine 55–cysteine 181, and cysteine 87–cysteine 103.

It belongs to the calycin superfamily. Triabin family. In terms of tissue distribution, expressed in salivary glands.

It localises to the secreted. Inhibits platelet aggregation, vasoconstriction, and angiogenesis through binding to distinct eicosanoids involved in inflammation (acts as a scavenger), and has a role in inhibiting host innate immunity by impairing platelet-assisted formation of neutrophil extracellular traps (NETs). Inhibits platelet aggregation by collagen (IC(50)=30 nM), thromboxane A2 mimetic (TXA2 mimetic), or arachidonic acid (AA) without affecting aggregation induced by ADP, convulxin (GP6 agonist), PMA, and ristocetin (vWF-dependent platelet agglutinator). Binds with high affinity to TXA2, TXB2, prostaglandine H2 mimetic (PGH2 mimetic), PGD2, PGJ2, and PGF2alpha. Also interacts with 15(S)-hydroxyeicosatetraenoic acid (HETE), being the first calycin/lipocalin described to date to bind to a derivative of 15-lipoxygenase. Binding is not observed to other prostaglandins, leukotrienes, HETEs, lipids, and biogenic amines. It prevents contraction of rat uterus stimulated by PGF2alpha and induces relaxation of aorta previously contracted with TXA2 mimetic. In addition, it inhibits angiogenesis mediated by 15(S)-HETE and does not enhance inhibition of collagen-induced platelet aggregation by SQ29548 (TXA2 antagonist) and indomethacin. Also impairs platelet-assisted formation of neutrophil extracellular traps (NETs). NETs are web-like structures of DNA and proteins that play an important role in killing of pathogens. In addition, NETs are implicated in thrombus formation. In vivo, this protein exhibits antithrombotic activity in two distinct mice models that are highly dependent on platelets. It is noteworthy that it inhibits thrombosis without promoting excessive bleeding. The polypeptide is Dipetalodipin (Dipetalogaster maximus (Blood-sucking bug)).